A 376-amino-acid chain; its full sequence is Succinyl-diaminopimelate desuccinylase (376 aa).

His-68 provides a ligand contact to Zn(2+). Asp-70 is a catalytic residue. Asp-101 is a binding site for Zn(2+). Glu-135 functions as the Proton acceptor in the catalytic mechanism. Positions 136, 164, and 349 each coordinate Zn(2+).

The protein belongs to the peptidase M20A family. DapE subfamily. In terms of assembly, homodimer. Requires Zn(2+) as cofactor. It depends on Co(2+) as a cofactor.

The catalysed reaction is N-succinyl-(2S,6S)-2,6-diaminopimelate + H2O = (2S,6S)-2,6-diaminopimelate + succinate. The protein operates within amino-acid biosynthesis; L-lysine biosynthesis via DAP pathway; LL-2,6-diaminopimelate from (S)-tetrahydrodipicolinate (succinylase route): step 3/3. Its function is as follows. Catalyzes the hydrolysis of N-succinyl-L,L-diaminopimelic acid (SDAP), forming succinate and LL-2,6-diaminopimelate (DAP), an intermediate involved in the bacterial biosynthesis of lysine and meso-diaminopimelic acid, an essential component of bacterial cell walls. The sequence is that of Succinyl-diaminopimelate desuccinylase from Marinobacter nauticus (strain ATCC 700491 / DSM 11845 / VT8) (Marinobacter aquaeolei).